The sequence spans 505 residues: uncharacterized protein (505 aa).

Residues 1 to 52 form a disordered region; it reads MVDGSIHVPVQSHEGQHDNSSSLNEEIQTSQDPLGIVESYQESSTSDFDKSH. The span at 18–32 shows a compositional bias: polar residues; the sequence is DNSSSLNEEIQTSQD. 10 helical membrane-spanning segments follow: residues 141–161, 173–193, 208–228, 235–255, 265–285, 290–310, 326–346, 362–382, 389–409, and 415–435; these read FWIVFFLGQVLSLCITATNTF, AFQTFLVYALLTLVYTPYTVF, GWKYIIFAFFDVEGNYFVVLA, LSASLLDSWATVAVVILSFIF, ILGVVACIGGLVLLVVSDVIS, SAVNPGLGDGYMIIGATCYGV, VVIGQLSLYGSIISIIQTFIF, GYLAGFILVMFLLYSLAPILF, FYNISLLTSDFWSLVIGIHVF, and WLYPIAFVLIILGLFVYHVFV. Phosphoserine is present on residues Ser463, Ser466, and Ser467.

The protein belongs to the SLC35F solute transporter family.

It localises to the golgi apparatus membrane. This is an uncharacterized protein from Schizosaccharomyces pombe (strain 972 / ATCC 24843) (Fission yeast).